Here is a 2390-residue protein sequence, read N- to C-terminus: Spectrin beta chain, non-erythrocytic 2 (2390 aa).

Ser-2 is modified (N-acetylserine). An actin-binding region spans residues Ser-2–His-278. Phosphoserine occurs at positions 6 and 31. 2 Calponin-homology (CH) domains span residues Ala-57–Gln-161 and Lys-176–Ser-281. Spectrin repeat units lie at residues Leu-306–Arg-414, Ala-427–Leu-527, Glu-532–Glu-639, Arg-642–Ala-744, Leu-749–Glu-849, and Tyr-855–Leu-954. Ser-959 is modified (phosphoserine). 11 Spectrin repeats span residues Ile-960–Glu-1063, Arg-1066–Ala-1169, Phe-1174–Lys-1262, Glu-1279–Leu-1379, Arg-1384–Gln-1485, Glu-1489–Asp-1586, Arg-1589–Glu-1692, Leu-1696–Leu-1797, Tyr-1801–Leu-1904, Phe-1910–Gln-2010, and Val-2017–Thr-2076. At Ser-1073 the chain carries Phosphoserine. The segment covering Arg-2081–Lys-2096 has biased composition (basic and acidic residues). Disordered stretches follow at residues Arg-2081 to Glu-2222 and Ser-2331 to Lys-2390. Polar residues predominate over residues Gln-2116–Gly-2125. Phosphoserine occurs at positions 2171 and 2199. The region spanning Gln-2218–Ala-2328 is the PH domain. Thr-2354 bears the Phosphothreonine mark. Ser-2359 carries the phosphoserine modification. Over residues Arg-2370–Phe-2383 the composition is skewed to basic and acidic residues.

Belongs to the spectrin family. In terms of tissue distribution, highly expressed in brain, kidney, pancreas, and liver, and at lower levels in lung and placenta.

It is found in the cytoplasm. The protein resides in the cytoskeleton. The protein localises to the cell cortex. Its function is as follows. Probably plays an important role in neuronal membrane skeleton. The sequence is that of Spectrin beta chain, non-erythrocytic 2 (SPTBN2) from Homo sapiens (Human).